Here is a 367-residue protein sequence, read N- to C-terminus: 3-dehydroquinate synthase (367 aa).

NAD(+)-binding positions include 99–103 (GVVGD), 123–124 (TT), Lys-136, Lys-145, and 163–166 (FLRT). Zn(2+) contacts are provided by Glu-178, His-242, and His-259.

It belongs to the sugar phosphate cyclases superfamily. Dehydroquinate synthase family. The cofactor is Co(2+). Zn(2+) serves as cofactor. Requires NAD(+) as cofactor.

The protein localises to the cytoplasm. The enzyme catalyses 7-phospho-2-dehydro-3-deoxy-D-arabino-heptonate = 3-dehydroquinate + phosphate. The protein operates within metabolic intermediate biosynthesis; chorismate biosynthesis; chorismate from D-erythrose 4-phosphate and phosphoenolpyruvate: step 2/7. Functionally, catalyzes the conversion of 3-deoxy-D-arabino-heptulosonate 7-phosphate (DAHP) to dehydroquinate (DHQ). This chain is 3-dehydroquinate synthase, found in Chlorobaculum parvum (strain DSM 263 / NCIMB 8327) (Chlorobium vibrioforme subsp. thiosulfatophilum).